The following is a 137-amino-acid chain: Putative pre-16S rRNA nuclease (137 aa).

This sequence belongs to the YqgF nuclease family.

The protein resides in the cytoplasm. In terms of biological role, could be a nuclease involved in processing of the 5'-end of pre-16S rRNA. In Desulforamulus reducens (strain ATCC BAA-1160 / DSM 100696 / MI-1) (Desulfotomaculum reducens), this protein is Putative pre-16S rRNA nuclease.